A 193-amino-acid polypeptide reads, in one-letter code: Sarcoplasmic calcium-binding protein, alpha chain (193 aa).

2 igE-binding epitope regions span residues 10 to 36 and 49 to 72; these read KYVV…LAVR and DAYA…ADFN. 3 EF-hand domains span residues 16 to 40, 57 to 92, and 101 to 136; these read MYDI…NTLI, IMRN…HCQG, and AFKV…RSAF. Asp18, Asp20, Asn22, Asp29, Asp70, Asn72, Asp74, Glu76, Glu81, Asp114, Asn116, Asp118, Lys120, and Glu125 together coordinate Ca(2+). The tract at residues 130–147 is igE-binding epitope; that stretch reads CITRSAFAEVKEIDDAYN.

SCPs from crayfish, lobster, and shrimp are polymorphic dimers; three isotypes (alpha-alpha, alpha-beta, and beta-beta) have been identified. Expressed in tail muscle (at protein level).

Like parvalbumins, SCPs seem to be more abundant in fast contracting muscles, but no functional relationship can be established from this distribution. The sequence is that of Sarcoplasmic calcium-binding protein, alpha chain from Penaeus vannamei (Whiteleg shrimp).